The sequence spans 932 residues: Protein translocase subunit SecA (932 aa).

ATP-binding positions include Q90, 108-112 (GEGKT), and D498.

Belongs to the SecA family. In terms of assembly, monomer and homodimer. Part of the essential Sec protein translocation apparatus which comprises SecA, SecYEG and auxiliary proteins SecDF. Other proteins may also be involved.

The protein localises to the cell inner membrane. The protein resides in the cellular thylakoid membrane. It is found in the cytoplasm. It carries out the reaction ATP + H2O + cellular proteinSide 1 = ADP + phosphate + cellular proteinSide 2.. Its function is as follows. Part of the Sec protein translocase complex. Interacts with the SecYEG preprotein conducting channel. Has a central role in coupling the hydrolysis of ATP to the transfer of proteins into and across the cell membrane, serving as an ATP-driven molecular motor driving the stepwise translocation of polypeptide chains across the membrane. Probably participates in protein translocation into and across both the cytoplasmic and thylakoid membranes in cyanobacterial cells. The protein is Protein translocase subunit SecA of Synechocystis sp. (strain ATCC 27184 / PCC 6803 / Kazusa).